A 148-amino-acid chain; its full sequence is Endoribonuclease YbeY (148 aa).

The Zn(2+) site is built by His105, His109, and Asp115.

This sequence belongs to the endoribonuclease YbeY family. Requires Zn(2+) as cofactor.

The protein resides in the cytoplasm. Single strand-specific metallo-endoribonuclease involved in late-stage 70S ribosome quality control and in maturation of the 3' terminus of the 16S rRNA. This Chlorobium phaeovibrioides (strain DSM 265 / 1930) (Prosthecochloris vibrioformis (strain DSM 265)) protein is Endoribonuclease YbeY.